The sequence spans 306 residues: UDP-3-O-acyl-N-acetylglucosamine deacetylase (306 aa).

Zn(2+)-binding residues include H79, H238, and D242. H265 functions as the Proton donor in the catalytic mechanism.

The protein belongs to the LpxC family. The cofactor is Zn(2+).

It catalyses the reaction a UDP-3-O-[(3R)-3-hydroxyacyl]-N-acetyl-alpha-D-glucosamine + H2O = a UDP-3-O-[(3R)-3-hydroxyacyl]-alpha-D-glucosamine + acetate. Its pathway is glycolipid biosynthesis; lipid IV(A) biosynthesis; lipid IV(A) from (3R)-3-hydroxytetradecanoyl-[acyl-carrier-protein] and UDP-N-acetyl-alpha-D-glucosamine: step 2/6. Catalyzes the hydrolysis of UDP-3-O-myristoyl-N-acetylglucosamine to form UDP-3-O-myristoylglucosamine and acetate, the committed step in lipid A biosynthesis. The polypeptide is UDP-3-O-acyl-N-acetylglucosamine deacetylase (Shewanella baltica (strain OS223)).